The following is a 907-amino-acid chain: Androgen receptor (907 aa).

The segment at 1-545 (MEVQLGLGRV…PIDYYFPPQK (545 aa)) is modulating. The segment at 1–574 (MEVQLGLGRV…GSCKVFFKRA (574 aa)) is interaction with ZNF318. Disordered regions lie at residues 36-152 (NPGP…LSLL) and 200-231 (QQQE…YLGG). Low complexity predominate over residues 55–76 (QQQQQQQQQQETSPRQQQQQQQ). Serine 67 carries the post-translational modification Phosphoserine; by CDK9. Serine 81 carries the post-translational modification Phosphoserine. The segment covering 123 to 134 (TSATGKGLQQQQ) has biased composition (polar residues). The segment covering 200–224 (QQQEVVSEGSSSGRAREAAGASTSS) has biased composition (low complexity). Tyrosine 228 carries the post-translational modification Phosphotyrosine; by CSK. At serine 261 the chain carries Phosphoserine. Tyrosine 272 bears the Phosphotyrosine; by CSK and TNK2 mark. 4 positions are modified to phosphotyrosine; by CSK: tyrosine 310, tyrosine 349, tyrosine 360, and tyrosine 365. Phosphotyrosine; by CSK and TNK2 is present on tyrosine 366. A Glycyl lysine isopeptide (Lys-Gly) (interchain with G-Cter in SUMO) cross-link involves residue lysine 389. Tyrosine 396 is modified (phosphotyrosine; by CSK). Lysine 508 is covalently cross-linked (Glycyl lysine isopeptide (Lys-Gly) (interchain with G-Cter in SUMO)). 2 positions are modified to phosphotyrosine; by CSK: tyrosine 522 and tyrosine 539. The interaction with LPXN stretch occupies residues 539 to 906 (YYFPPQKTCL…GKVKPIYFHT (368 aa)). Positions 546–619 (TCLICGDEAS…AGMTLGARKL (74 aa)) form a DNA-binding region, nuclear receptor. NR C4-type zinc fingers lie at residues 547-567 (CLIC…CGSC) and 583-607 (CASR…LRKC). Residues 559 to 649 (YGALTCGSCK…TEEPTQKLTV (91 aa)) are interaction with HIPK3. An interaction with CCAR1 region spans residues 579 to 906 (QKYLCASRND…GKVKPIYFHT (328 aa)). An interaction with KAT7 region spans residues 612–906 (MTLGARKLKK…GKVKPIYFHT (295 aa)). Phosphoserine; by STK4/MST1 is present on serine 638. The NR LBD domain occupies 656–887 (ECQPIFLNVL…DFPEMMAEII (232 aa)). 17beta-hydroxy-5alpha-androstan-3-one contacts are provided by asparagine 693 and arginine 740. Residues lysine 833 and lysine 835 each participate in a glycyl lysine isopeptide (Lys-Gly) (interchain with G-Cter in ubiquitin) cross-link. Threonine 865 provides a ligand contact to 17beta-hydroxy-5alpha-androstan-3-one. At tyrosine 903 the chain carries Phosphotyrosine; by CSK.

This sequence belongs to the nuclear hormone receptor family. NR3 subfamily. As to quaternary structure, binds DNA as a homodimer. Part of a ternary complex containing AR, EFCAB6/DJBP and PARK7. Interacts with HIPK3 and NR0B2 in the presence of androgen. The ligand binding domain interacts with KAT7/HBO1 in the presence of dihydrotestosterone. Interacts with EFCAB6/DJBP, PQBP1, RANBP9, RBAK, SPDEF, SRA1, TGFB1I1 and RREB1. Interacts with ZMIZ1/ZIMP10 and ZMIZ2/ZMIP7 which both enhance its transactivation activity. Interacts with SLC30A9 and RAD54L2/ARIP4. Interacts with MACROD1 (via macro domain). Interacts via the ligand-binding domain with LXXLL and FXXLF motifs from NCOA1, NCOA2, NCOA3 and MAGEA11. Interacts (via nuclear receptor DNA binding domain and nuclear receptor ligand binding domain) with NCOA4. The AR N-terminal poly-Gln region binds Ran resulting in enhancement of AR-mediated transactivation. Ran-binding decreases as the poly-Gln length increases. Interacts with HIP1 (via coiled coil domain). Interacts (via ligand-binding domain) with TRIM68. Interacts with TNK2. Interacts with USP26. Interacts with RNF6. Interacts (regulated by RNF6 probably through polyubiquitination) with RNF14; regulates AR transcriptional activity. Interacts with PRMT2 and TRIM24. Interacts with RACK1. Interacts with RANBP10; this interaction enhances dihydrotestosterone-induced AR transcriptional activity. Interacts with PRPF6 in a hormone-independent way; this interaction enhances dihydrotestosterone-induced AR transcriptional activity. Interacts with STK4/MST1. Interacts with ZIPK/DAPK3. Interacts with LPXN. Interacts with MAK. Part of a complex containing AR, MAK and NCOA3. Interacts with CRY1. Interacts with CCAR1 and GATA2. Interacts with ZNF318. Interacts with BUD31. Interacts with ARID4A. Interacts with ARID4B. Interacts (via NR LBD domain) with ZBTB7A; the interaction is direct and androgen-dependent. Interacts with NCOR1. Interacts with NCOR2. Interacts witH CRY2 in a ligand-dependent manner. Post-translationally, phosphorylated in prostate cancer cells in response to several growth factors including EGF. Phosphorylation is induced by c-Src kinase (CSK). Tyr-522 is one of the major phosphorylation sites and an increase in phosphorylation and Src kinase activity is associated with prostate cancer progression. Phosphorylation by TNK2 enhances the DNA-binding and transcriptional activity. Phosphorylation at Ser-67 by CDK9 regulates AR promoter selectivity and cell growth. Sumoylated on Lys-389 (major) and Lys-508. Ubiquitinated. Deubiquitinated by USP26. 'Lys-6' and 'Lys-27'-linked polyubiquitination by RNF6 modulates AR transcriptional activity and specificity. In terms of processing, palmitoylated by ZDHHC7 and ZDHHC21. Palmitoylation is required for plasma membrane targeting and for rapid intracellular signaling via ERK and AKT kinases and cAMP generation.

It localises to the nucleus. The protein resides in the cytoplasm. In terms of biological role, steroid hormone receptors are ligand-activated transcription factors that regulate eukaryotic gene expression and affect cellular proliferation and differentiation in target tissues. Transcription factor activity is modulated by bound coactivator and corepressor proteins like ZBTB7A that recruits NCOR1 and NCOR2 to the androgen response elements/ARE on target genes, negatively regulating androgen receptor signaling and androgen-induced cell proliferation. Transcription activation is also down-regulated by NR0B2. Activated, but not phosphorylated, by HIPK3 and ZIPK/DAPK3. In Canis lupus familiaris (Dog), this protein is Androgen receptor (AR).